Reading from the N-terminus, the 120-residue chain is Seripauperin-2 (120 aa).

Residues 7–24 (IAAGVAAIAATASATTTL) form a helical membrane-spanning segment.

This sequence belongs to the SRP1/TIP1 family. Seripauperin subfamily.

It localises to the membrane. This is Seripauperin-2 (PAU2) from Saccharomyces cerevisiae (strain ATCC 204508 / S288c) (Baker's yeast).